The chain runs to 679 residues: Methionine--tRNA ligase (679 aa).

Residues 15 to 25 (PYANGPVHIGH) carry the 'HIGH' region motif. Cysteine 147, cysteine 150, cysteine 160, and cysteine 163 together coordinate Zn(2+). The 'KMSKS' region motif lies at 332 to 336 (KISTS). Threonine 335 provides a ligand contact to ATP. The 102-residue stretch at 578–679 (DFMKLDIRVG…REVKPGSEVK (102 aa)) folds into the tRNA-binding domain.

It belongs to the class-I aminoacyl-tRNA synthetase family. MetG type 1 subfamily. As to quaternary structure, homodimer. Requires Zn(2+) as cofactor.

Its subcellular location is the cytoplasm. It carries out the reaction tRNA(Met) + L-methionine + ATP = L-methionyl-tRNA(Met) + AMP + diphosphate. Functionally, is required not only for elongation of protein synthesis but also for the initiation of all mRNA translation through initiator tRNA(fMet) aminoacylation. The sequence is that of Methionine--tRNA ligase from Bacteroides fragilis (strain ATCC 25285 / DSM 2151 / CCUG 4856 / JCM 11019 / LMG 10263 / NCTC 9343 / Onslow / VPI 2553 / EN-2).